The chain runs to 231 residues: Large ribosomal subunit protein uL1 (231 aa).

This sequence belongs to the universal ribosomal protein uL1 family. In terms of assembly, part of the 50S ribosomal subunit.

Binds directly to 23S rRNA. The L1 stalk is quite mobile in the ribosome, and is involved in E site tRNA release. Its function is as follows. Protein L1 is also a translational repressor protein, it controls the translation of the L11 operon by binding to its mRNA. The sequence is that of Large ribosomal subunit protein uL1 from Francisella tularensis subsp. tularensis (strain WY96-3418).